Reading from the N-terminus, the 329-residue chain is GTPase Obg (329 aa).

Residues 1 to 159 form the Obg domain; sequence MQFIDQARIT…WPLQLELKLL (159 aa). In terms of domain architecture, OBG-type G spans 160-328; the sequence is AEVGIIGLPN…LLDQVWQLLG (169 aa). ATP is bound by residues 166 to 173, 191 to 195, 213 to 216, 280 to 283, and 309 to 311; these read GLPNAGKS, FTTLV, DIPG, NKLE, and SAV. Mg(2+) is bound by residues Ser173 and Thr193.

It belongs to the TRAFAC class OBG-HflX-like GTPase superfamily. OBG GTPase family. In terms of assembly, monomer. Mg(2+) serves as cofactor.

The protein resides in the cytoplasm. Its function is as follows. An essential GTPase which binds GTP, GDP and possibly (p)ppGpp with moderate affinity, with high nucleotide exchange rates and a fairly low GTP hydrolysis rate. Plays a role in control of the cell cycle, stress response, ribosome biogenesis and in those bacteria that undergo differentiation, in morphogenesis control. This is GTPase Obg from Synechococcus sp. (strain WH7803).